The following is a 374-amino-acid chain: MVEVFDKYKDLIQEGDLALIWISRDNIKPVTINANETFNTRYGSFPHKDMIGKPYGSQIAIRTKVAKKFAFVHVMQPSPELWTLSLPHRTQIVYTPDSSYIMQRLNCSPNSRVIEAGTGSGSFSHAFARSVGQLYSYEFHPVRYEQATEEFKEHGLLDKNTIITHRDVCKDGFTIKKTDETSYQFKADEEQLQIKADVIFLDLPAPWEAIPHIDSVIDNDEKVGLCCFSPCIEQVDKTLEVLEKHGWFNVEMVEIQGRQYESRRQMVRSLDDALERLSDIKKRKLAMVERRQKAEEELEKKIEANEKNLPELPPKSIEKSKFNPFGKGYRVKEGDANFQWKEVTKVESEIKSHTSYLTFAYKIKRNEDENLDKN.

S-adenosyl-L-methionine contacts are provided by residues 120–122, glutamate 138, arginine 143, 167–168, and aspartate 202; these read SGS and DV.

Belongs to the class I-like SAM-binding methyltransferase superfamily. TRM61 family. Heterotetramer; composed of two copies of TRM6 and two copies of TRM61.

Its subcellular location is the nucleus. The catalysed reaction is adenosine(58) in tRNA + S-adenosyl-L-methionine = N(1)-methyladenosine(58) in tRNA + S-adenosyl-L-homocysteine + H(+). Functionally, catalytic subunit of tRNA (adenine-N(1)-)-methyltransferase, which catalyzes the formation of N(1)-methyladenine at position 58 (m1A58) in initiator methionyl-tRNA. The polypeptide is tRNA (adenine(58)-N(1))-methyltransferase catalytic subunit TRM61 (TRM61) (Candida glabrata (strain ATCC 2001 / BCRC 20586 / JCM 3761 / NBRC 0622 / NRRL Y-65 / CBS 138) (Yeast)).